The following is a 205-amino-acid chain: Thiamine-phosphate synthase (205 aa).

4-amino-2-methyl-5-(diphosphooxymethyl)pyrimidine contacts are provided by residues 34 to 38 (QLRCK) and Asn66. Residues Asp67 and Asp86 each contribute to the Mg(2+) site. Ser105 is a 4-amino-2-methyl-5-(diphosphooxymethyl)pyrimidine binding site. Position 131-133 (131-133 (TTT)) interacts with 2-[(2R,5Z)-2-carboxy-4-methylthiazol-5(2H)-ylidene]ethyl phosphate. Lys134 is a binding site for 4-amino-2-methyl-5-(diphosphooxymethyl)pyrimidine. Gly163 is a binding site for 2-[(2R,5Z)-2-carboxy-4-methylthiazol-5(2H)-ylidene]ethyl phosphate.

The protein belongs to the thiamine-phosphate synthase family. Requires Mg(2+) as cofactor.

It catalyses the reaction 2-[(2R,5Z)-2-carboxy-4-methylthiazol-5(2H)-ylidene]ethyl phosphate + 4-amino-2-methyl-5-(diphosphooxymethyl)pyrimidine + 2 H(+) = thiamine phosphate + CO2 + diphosphate. It carries out the reaction 2-(2-carboxy-4-methylthiazol-5-yl)ethyl phosphate + 4-amino-2-methyl-5-(diphosphooxymethyl)pyrimidine + 2 H(+) = thiamine phosphate + CO2 + diphosphate. The catalysed reaction is 4-methyl-5-(2-phosphooxyethyl)-thiazole + 4-amino-2-methyl-5-(diphosphooxymethyl)pyrimidine + H(+) = thiamine phosphate + diphosphate. The protein operates within cofactor biosynthesis; thiamine diphosphate biosynthesis; thiamine phosphate from 4-amino-2-methyl-5-diphosphomethylpyrimidine and 4-methyl-5-(2-phosphoethyl)-thiazole: step 1/1. In terms of biological role, condenses 4-methyl-5-(beta-hydroxyethyl)thiazole monophosphate (THZ-P) and 2-methyl-4-amino-5-hydroxymethyl pyrimidine pyrophosphate (HMP-PP) to form thiamine monophosphate (TMP). The sequence is that of Thiamine-phosphate synthase from Neisseria meningitidis serogroup A / serotype 4A (strain DSM 15465 / Z2491).